The sequence spans 682 residues: ATP-dependent zinc metalloprotease FtsH (682 aa).

Over 1 to 7 the chain is Cytoplasmic; sequence MKQSHKT. Residues 8 to 28 form a helical membrane-spanning segment; the sequence is ILLWALLIFLFVMIYNLISDG. Over 29-138 the chain is Periplasmic; the sequence is TSGEETLDTT…YEVKAKEEST (110 aa). The chain crosses the membrane as a helical span at residues 139–159; it reads FWQSLLISWLPMLLLFALFFF. The Cytoplasmic segment spans residues 160–682; the sequence is FMRQLQAGGG…SGTDPEPEPA (523 aa). An ATP-binding site is contributed by 232–239; sequence GPPGTGKT. Histidine 454 contributes to the Zn(2+) binding site. The active site involves glutamate 455. Residues histidine 458 and aspartate 531 each coordinate Zn(2+). Residues 638–682 are disordered; that stretch reads LSRPAVVSKPSADAESSVDEDEREARPALFPPLGKSGTDPEPEPA.

In the central section; belongs to the AAA ATPase family. The protein in the C-terminal section; belongs to the peptidase M41 family. Homohexamer. Zn(2+) serves as cofactor.

It is found in the cell inner membrane. Acts as a processive, ATP-dependent zinc metallopeptidase for both cytoplasmic and membrane proteins. Plays a role in the quality control of integral membrane proteins. This is ATP-dependent zinc metalloprotease FtsH from Haliangium ochraceum (strain DSM 14365 / JCM 11303 / SMP-2).